The sequence spans 232 residues: Large ribosomal subunit protein uL1 (232 aa).

The protein belongs to the universal ribosomal protein uL1 family. As to quaternary structure, part of the 50S ribosomal subunit.

Binds directly to 23S rRNA. The L1 stalk is quite mobile in the ribosome, and is involved in E site tRNA release. Functionally, protein L1 is also a translational repressor protein, it controls the translation of the L11 operon by binding to its mRNA. The chain is Large ribosomal subunit protein uL1 from Bartonella henselae (strain ATCC 49882 / DSM 28221 / CCUG 30454 / Houston 1) (Rochalimaea henselae).